Reading from the N-terminus, the 363-residue chain is MAKQKIRVLIVDDSASVRQVLGTILAEDPEIEVIGTASDPFVAAKRLQNELPDVILLDIEMPRMDGITFLRKIMAQHPIPVVICSSLTPEGSDLMFEALEAGAVDIVPKPRVDTRQALMESSGRLREAIKSAARARVRPRAARKVIEQKLTADAIIPPPVAGRSRPTTERIVCIGVSTGGTEALYDVLEVLPPNCPGILIVQHMPQGFTAAFAKRLNAGCQINVKEAEDGDPVLPGWAYIAPGARHMLLVRSGLRYQIAIKDGPPVSRHRPSADVLFRSAAQYAGANALGIIMTGMGDDGARGLLEMRKLGAYTCAQDEESCVVFGMPKEAIACGAVEKVVSLNQIPREIMAWQQAKQPASAD.

The Response regulatory domain occupies 7 to 124; that stretch reads RVLIVDDSAS…RQALMESSGR (118 aa). D58 bears the 4-aspartylphosphate mark. A CheB-type methylesterase domain is found at 166 to 357; that stretch reads PTTERIVCIG…REIMAWQQAK (192 aa). Catalysis depends on residues S177, H203, and D299.

This sequence belongs to the CheB family. In terms of processing, phosphorylated by CheA. Phosphorylation of the N-terminal regulatory domain activates the methylesterase activity.

It is found in the cytoplasm. The enzyme catalyses [protein]-L-glutamate 5-O-methyl ester + H2O = L-glutamyl-[protein] + methanol + H(+). The catalysed reaction is L-glutaminyl-[protein] + H2O = L-glutamyl-[protein] + NH4(+). Its function is as follows. Involved in chemotaxis. Part of a chemotaxis signal transduction system that modulates chemotaxis in response to various stimuli. Catalyzes the demethylation of specific methylglutamate residues introduced into the chemoreceptors (methyl-accepting chemotaxis proteins or MCP) by CheR. Also mediates the irreversible deamidation of specific glutamine residues to glutamic acid. This is Protein-glutamate methylesterase/protein-glutamine glutaminase of group 3 operon from Rhodopseudomonas palustris (strain ATCC BAA-98 / CGA009).